We begin with the raw amino-acid sequence, 61 residues long: Large ribosomal subunit protein bL28 (61 aa).

Belongs to the bacterial ribosomal protein bL28 family.

The chain is Large ribosomal subunit protein bL28 from Lacticaseibacillus paracasei (strain ATCC 334 / BCRC 17002 / CCUG 31169 / CIP 107868 / KCTC 3260 / NRRL B-441) (Lactobacillus paracasei).